The primary structure comprises 501 residues: Proline--tRNA ligase (501 aa).

It belongs to the class-II aminoacyl-tRNA synthetase family. ProS type 3 subfamily. As to quaternary structure, homodimer.

Its subcellular location is the cytoplasm. It carries out the reaction tRNA(Pro) + L-proline + ATP = L-prolyl-tRNA(Pro) + AMP + diphosphate. Catalyzes the attachment of proline to tRNA(Pro) in a two-step reaction: proline is first activated by ATP to form Pro-AMP and then transferred to the acceptor end of tRNA(Pro). In Halobacterium salinarum (strain ATCC 29341 / DSM 671 / R1), this protein is Proline--tRNA ligase.